The primary structure comprises 233 residues: Cytidylate kinase (233 aa).

15 to 23 (GPSGAGKST) is an ATP binding site. Positions 183–201 (RRDEQDSGREHAPLRRADD) are enriched in basic and acidic residues. Residues 183–202 (RRDEQDSGREHAPLRRADDA) form a disordered region.

Belongs to the cytidylate kinase family. Type 1 subfamily.

The protein localises to the cytoplasm. The catalysed reaction is CMP + ATP = CDP + ADP. The enzyme catalyses dCMP + ATP = dCDP + ADP. The sequence is that of Cytidylate kinase from Geobacter sulfurreducens (strain ATCC 51573 / DSM 12127 / PCA).